A 268-amino-acid chain; its full sequence is Tryptophan synthase alpha chain (268 aa).

Residues E49 and D60 each act as proton acceptor in the active site.

Belongs to the TrpA family. In terms of assembly, tetramer of two alpha and two beta chains.

It carries out the reaction (1S,2R)-1-C-(indol-3-yl)glycerol 3-phosphate + L-serine = D-glyceraldehyde 3-phosphate + L-tryptophan + H2O. Its pathway is amino-acid biosynthesis; L-tryptophan biosynthesis; L-tryptophan from chorismate: step 5/5. Its function is as follows. The alpha subunit is responsible for the aldol cleavage of indoleglycerol phosphate to indole and glyceraldehyde 3-phosphate. This is Tryptophan synthase alpha chain from Aliivibrio fischeri (strain MJ11) (Vibrio fischeri).